We begin with the raw amino-acid sequence, 361 residues long: Peptide chain release factor 1 (361 aa).

Q236 is subject to N5-methylglutamine.

This sequence belongs to the prokaryotic/mitochondrial release factor family. Post-translationally, methylated by PrmC. Methylation increases the termination efficiency of RF1.

Its subcellular location is the cytoplasm. Functionally, peptide chain release factor 1 directs the termination of translation in response to the peptide chain termination codons UAG and UAA. The sequence is that of Peptide chain release factor 1 from Lactobacillus acidophilus (strain ATCC 700396 / NCK56 / N2 / NCFM).